Consider the following 189-residue polypeptide: TATA-box-binding protein 1 (189 aa).

Tandem repeats lie at residues 10–86 and 101–179.

The protein belongs to the TBP family.

General factor that plays a role in the activation of archaeal genes transcribed by RNA polymerase. Binds specifically to the TATA box promoter element which lies close to the position of transcription initiation. This is TATA-box-binding protein 1 (tbp1) from Haloferax volcanii (strain ATCC 29605 / DSM 3757 / JCM 8879 / NBRC 14742 / NCIMB 2012 / VKM B-1768 / DS2) (Halobacterium volcanii).